Consider the following 80-residue polypeptide: U-Asilidin(1)-Dg12 (80 aa).

Positions 1–24 are cleaved as a signal peptide; that stretch reads MARLLVVSVGVFLAVIMLSSETMS. The propeptide occupies 25 to 46; that stretch reads LPAGENLPALTLFEAQNQLIGL. 3 cysteine pairs are disulfide-bonded: Cys-53–Cys-67, Cys-60–Cys-71, and Cys-66–Cys-78.

This sequence belongs to the asilidin-1 family. In terms of tissue distribution, expressed by the venom gland.

It localises to the secreted. In terms of biological role, neurotoxin that may modulate ions channels (other than those tested). In vivo, induces neurotoxic effects when injected into insects (tested on L.cuprina and A.domesticus). This chain is U-Asilidin(1)-Dg12, found in Dolopus genitalis (Giant Australian assassin fly).